The primary structure comprises 142 residues: Large ribosomal subunit protein uL13 (142 aa).

This sequence belongs to the universal ribosomal protein uL13 family. As to quaternary structure, part of the 50S ribosomal subunit.

Functionally, this protein is one of the early assembly proteins of the 50S ribosomal subunit, although it is not seen to bind rRNA by itself. It is important during the early stages of 50S assembly. The sequence is that of Large ribosomal subunit protein uL13 from Bordetella bronchiseptica (strain ATCC BAA-588 / NCTC 13252 / RB50) (Alcaligenes bronchisepticus).